Reading from the N-terminus, the 175-residue chain is Arsenite oxidase subunit AioB (175 aa).

A signal peptide (tat-type signal) is located at residues 1–32; sequence MSDTINLTRRGFLKVSGSGVAVAATLSPIASA. Residues 62–158 form the Rieske domain; the sequence is NEPVSFTYPD…LRYDEASDAL (97 aa). Cysteine 102, histidine 104, cysteine 120, and histidine 123 together coordinate [2Fe-2S] cluster. A disulfide bridge links cysteine 107 with cysteine 122.

It belongs to the AOX family. As to quaternary structure, heterodimer consisting of a large and a small subunit. Requires [2Fe-2S] cluster as cofactor. Predicted to be exported by the Tat system. The position of the signal peptide cleavage has not been experimentally proven.

It catalyses the reaction 2 oxidized [azurin] + arsenite + H2O = 2 reduced [azurin] + arsenate + 3 H(+). Involved in the detoxification of arsenic. Oxidizes As(III)O3(3-) (arsenite) to the somewhat less toxic As(V)O4(3-) (arsenate). This is Arsenite oxidase subunit AioB (aioB) from Alcaligenes faecalis.